We begin with the raw amino-acid sequence, 335 residues long: Ketol-acid reductoisomerase (NADP(+)) 2 (335 aa).

One can recognise a KARI N-terminal Rossmann domain in the interval 1–180; sequence MKTYYEKDAN…GCTRAGVIET (180 aa). NADP(+) contacts are provided by residues 24 to 27, Arg-47, Ser-51, and 81 to 84; these read YGSQ and DEQQ. His-106 is a catalytic residue. Gly-132 serves as a coordination point for NADP(+). The region spanning 181–326 is the KARI C-terminal knotted domain; it reads TFQEETETDL…AELREMMSWI (146 aa). The Mg(2+) site is built by Asp-189, Glu-193, Glu-225, and Glu-229. Substrate is bound at residue Ser-250.

It belongs to the ketol-acid reductoisomerase family. Requires Mg(2+) as cofactor.

It carries out the reaction (2R)-2,3-dihydroxy-3-methylbutanoate + NADP(+) = (2S)-2-acetolactate + NADPH + H(+). It catalyses the reaction (2R,3R)-2,3-dihydroxy-3-methylpentanoate + NADP(+) = (S)-2-ethyl-2-hydroxy-3-oxobutanoate + NADPH + H(+). It functions in the pathway amino-acid biosynthesis; L-isoleucine biosynthesis; L-isoleucine from 2-oxobutanoate: step 2/4. The protein operates within amino-acid biosynthesis; L-valine biosynthesis; L-valine from pyruvate: step 2/4. Involved in the biosynthesis of branched-chain amino acids (BCAA). Catalyzes an alkyl-migration followed by a ketol-acid reduction of (S)-2-acetolactate (S2AL) to yield (R)-2,3-dihydroxy-isovalerate. In the isomerase reaction, S2AL is rearranged via a Mg-dependent methyl migration to produce 3-hydroxy-3-methyl-2-ketobutyrate (HMKB). In the reductase reaction, this 2-ketoacid undergoes a metal-dependent reduction by NADPH to yield (R)-2,3-dihydroxy-isovalerate. This is Ketol-acid reductoisomerase (NADP(+)) 2 from Bacillus cereus (strain ZK / E33L).